The sequence spans 73 residues: Conotoxin Cl14.8 (73 aa).

A signal peptide spans 1–19 (MKLSVTFIALMLTMTLTQG). Positions 20–47 (FVLQAIDGRDNSGLDDLSEADSMEHQLQ) are excised as a propeptide.

This sequence belongs to the conotoxin L superfamily. Post-translationally, contains 2 disulfide bonds. As to expression, expressed by the venom duct.

It localises to the secreted. This chain is Conotoxin Cl14.8, found in Californiconus californicus (California cone).